Here is a 634-residue protein sequence, read N- to C-terminus: Mitochondrial Rho GTPase 1 (634 aa).

The Cytoplasmic segment spans residues 1 to 604 (MLCCMRICVC…PRSEEDVEGK (604 aa)). In terms of domain architecture, Miro 1 spans 2–171 (LCCMRICVCG…FFLCQKAVTH (170 aa)). GTP-binding positions include 11–18 (GDEGTGKS), 60–64 (DTSAV), and 116–119 (NKSD). 2 EF-hand domains span residues 187 to 222 (AAVAALQRIFYLSDKDRDGYLSDKEIKDFQMRCFEK) and 307 to 342 (EGYRFFVNLFLLSDKDNDGGLNDAELASLFAPTPGL). Residues Asp200, Asp202, Asp204, Tyr206, Glu211, Asp320, Asp322, Asp324, and Glu331 each coordinate Ca(2+). The disordered stretch occupies residues 399 to 419 (NPSTTAALKVTRPRKRRKRPG). Residues 409–419 (TRPRKRRKRPG) show a composition bias toward basic residues. Residues 423 to 589 (RNVVLGHIVG…FVHIAEAAME (167 aa)) enclose the Miro 2 domain. GTP is bound by residues 432–439 (GAPGSGKS), 468–472 (ELPGG), and 538–541 (LKAD). Residues 605–625 (WMSWGIALGAVVCAGAAAVMI) traverse the membrane as a helical; Anchor for type IV membrane protein segment. The Mitochondrial intermembrane segment spans residues 626 to 634 (WRRVSGSGV).

This sequence belongs to the mitochondrial Rho GTPase family.

It is found in the mitochondrion outer membrane. Functionally, mitochondrial GTPase involved in mitochondrial trafficking. Probably involved in control of anterograde transport of mitochondria and their subcellular distribution. In Emericella nidulans (strain FGSC A4 / ATCC 38163 / CBS 112.46 / NRRL 194 / M139) (Aspergillus nidulans), this protein is Mitochondrial Rho GTPase 1 (gem1).